The sequence spans 611 residues: Actin-binding LIM protein 2 (611 aa).

LIM zinc-binding domains lie at 22 to 81 (ILCN…LYGT), 81 to 141 (TRCF…VSVG), 151 to 210 (RSCG…KFGI), and 210 to 270 (IRCD…ARTE). Zn(2+)-binding residues include Cys-83, Cys-86, His-103, Cys-106, Cys-109, Cys-112, Cys-131, and Cys-134. Zn(2+)-binding residues include Cys-212, Cys-215, His-232, Cys-235, Cys-238, Cys-241, His-260, and Cys-263. Residues 269 to 278 (TEDRNKETRT) show a composition bias toward basic and acidic residues. Disordered stretches follow at residues 269–295 (TEDRNKETRTSSESIISVPASSTSGSP) and 336–527 (YISH…DQRN). 2 stretches are compositionally biased toward low complexity: residues 279–295 (SSESIISVPASSTSGSP) and 363–372 (SSPSSTGSVS). Residues Ser-282, Ser-294, Ser-364, and Ser-367 each carry the phosphoserine modification. The segment covering 393 to 404 (SGRSTPSLSVLS) has biased composition (polar residues). Ser-452 bears the Phosphoserine mark. At Thr-472 the chain carries Phosphothreonine. The segment covering 473–488 (RTNSPDLDTQSLSHSS) has biased composition (polar residues). Residues Ser-476 and Ser-578 each carry the phosphoserine modification. The region spanning 543 to 611 (MREYKIYPYD…NDLKKKALLF (69 aa)) is the HP domain.

Interacts with F-actin and ABRA. Highly expressed in skeletal muscle.

Its subcellular location is the cytoplasm. May act as scaffold protein. May stimulate ABRA activity and ABRA-dependent SRF transcriptional activity. In Homo sapiens (Human), this protein is Actin-binding LIM protein 2 (ABLIM2).